The chain runs to 265 residues: Undecaprenyl-diphosphatase (265 aa).

Helical transmembrane passes span 42–62, 90–110, 115–135, 160–182, 195–215, 222–242, and 245–265; these read EAIP…IVYF, ISFL…LLLF, VEIS…VTGI, VAQG…ALLL, FLMS…MGMV, IVGL…FLKV, and KVDF…TMFL.

It belongs to the UppP family.

Its subcellular location is the cell membrane. The catalysed reaction is di-trans,octa-cis-undecaprenyl diphosphate + H2O = di-trans,octa-cis-undecaprenyl phosphate + phosphate + H(+). Functionally, catalyzes the dephosphorylation of undecaprenyl diphosphate (UPP). The protein is Undecaprenyl-diphosphatase of Methanococcoides burtonii (strain DSM 6242 / NBRC 107633 / OCM 468 / ACE-M).